The sequence spans 479 residues: Calcium uniporter protein, mitochondrial (479 aa).

Residues 1-54 (MNHALRRATLGLSPGLRASRLQQSFAKHQIPAVYRCEAASTPLQRAFTTSRCFR) constitute a mitochondrion transit peptide. The Mitochondrial matrix segment spans residues 55-323 (QETAAESEKD…DTLAHQGAHR (269 aa)). 2 disordered regions span residues 56–125 (ETAA…KGRL) and 206–238 (EADQ…HEGP). Positions 59–79 (AESEKDDAARREEQSERARKR) form a coiled coil. A compositionally biased stretch (basic and acidic residues) spans 60 to 75 (ESEKDDAARREEQSER). Residues 83 to 93 (NVTSGSSAQTL) are compositionally biased toward polar residues. 2 stretches are compositionally biased toward basic and acidic residues: residues 94 to 122 (ENDR…DMKK) and 206 to 224 (EADQ…KKDN). A helical transmembrane segment spans residues 324–344 (LAQGGFAALAGWWGVVYYVTF). Residues 345–354 (HTQAGWDLVE) are Mitochondrial intermembrane-facing. The Selectivity filter signature appears at 350-358 (WDLVEPVTY). Glu-354 is a Ca(2+) binding site. Residues 355 to 375 (PVTYLAGLTTVMGAYLWFLYI) traverse the membrane as a helical segment. Over 376-479 (SRDLSYKAAM…GSSDKIKKKQ (104 aa)) the chain is Mitochondrial matrix. A compositionally biased stretch (basic and acidic residues) spans 445 to 462 (KVLEEEKQGRDGTKVTEG). The segment at 445-479 (KVLEEEKQGRDGTKVTEGKDEDDGPGSSDKIKKKQ) is disordered.

Belongs to the MCU (TC 1.A.77) family. In terms of assembly, homotetramer, assembles in a dimer or dimers configuration with two interfaces.

The protein localises to the mitochondrion inner membrane. The enzyme catalyses Ca(2+)(in) = Ca(2+)(out). Its function is as follows. Highly selective calcium channel localized to the inner mitochondrial membrane, which mediates calcium uptake into the mitochondrial matrix. Mitochondrial calcium homeostasis plays key roles in cellular physiology and regulates ATP production, cytoplasmic calcium signals and activation of cell death pathways. Sufficient to operate as a pore-forming channel without the need of calcium-sensor or auxiliary subunit. This Gibberella zeae (strain ATCC MYA-4620 / CBS 123657 / FGSC 9075 / NRRL 31084 / PH-1) (Wheat head blight fungus) protein is Calcium uniporter protein, mitochondrial.